Consider the following 412-residue polypeptide: Carboxypeptidase B1 (412 aa).

The N-terminal stretch at Met-1–Ala-18 is a signal peptide. A propeptide spans Arg-19–Ser-75 (activation peptide). A Peptidase M14 domain is found at Ser-118–Val-408. Zn(2+) is bound by residues His-175 and Glu-178. Residue His-175–Glu-178 participates in a peptide binding. An N-linked (GlcNAc...) asparagine glycan is attached at Asn-205. Residues Arg-230 and Asn-246–Arg-247 contribute to the a peptide site. A disulfide bond links Cys-240 and Cys-263. Residue His-299 coordinates Zn(2+). A peptide-binding positions include Ser-300–Tyr-301 and Tyr-351. The Proton donor/acceptor role is filled by Glu-374. Asn-395 is a glycosylation site (N-linked (GlcNAc...) asparagine).

Belongs to the peptidase M14 family. Monomer. Interacts with Dengue virus type 2 (DENV2, MY89-88549 strain) envelope protein E. Interacts with Dengue virus envelope protein E type 3, type 2, type 4 and type 1 with decreasing strength. Zn(2+) serves as cofactor. In terms of tissue distribution, expressed in midgut (at protein level).

The protein resides in the endoplasmic reticulum. The catalysed reaction is Preferential release of a C-terminal lysine or arginine amino acid.. Its activity is regulated as follows. Inhibited by S.tuberosum metallocarboxypeptidase inhibitor. Functionally, carboxypeptidase that preferentially hydrolyzes arginine and lysine residues at the C-terminus. During infection by dengue virus, may play a role in preventing viral packaging, maturation, and release from the midgut. The protein is Carboxypeptidase B1 of Aedes aegypti (Yellowfever mosquito).